Here is a 138-residue protein sequence, read N- to C-terminus: Beta-galactosidase (138 aa).

Belongs to the glycosyl hydrolase 2 family.

It carries out the reaction Hydrolysis of terminal non-reducing beta-D-galactose residues in beta-D-galactosides.. This Rhizobium radiobacter (Agrobacterium tumefaciens) protein is Beta-galactosidase (lacZ).